The following is a 238-amino-acid chain: MKRSKAYRAAAEKINPENLYSPLDAVRLAQETSTTKYDATVEVAIRLGVDPRKADQMVRGTVNLPHGTGKSPRVAVFAAGEKAAEATAAGADIVGSDDLVARIQEGFLDFDATVATPDQMAKVGRIARILGPRGLMPNPKTGTVTLDIGKAVADIKGGKINFRVDKQGNLHIVIGKTNFTDAQLIENYTAALDEIVRVKPSAAKGRYLKKVTFATTMGPGIPVDPNRTRNLLEESVPA.

This sequence belongs to the universal ribosomal protein uL1 family. As to quaternary structure, part of the 50S ribosomal subunit.

Binds directly to 23S rRNA. The L1 stalk is quite mobile in the ribosome, and is involved in E site tRNA release. Functionally, protein L1 is also a translational repressor protein, it controls the translation of the L11 operon by binding to its mRNA. This Frankia alni (strain DSM 45986 / CECT 9034 / ACN14a) protein is Large ribosomal subunit protein uL1.